A 1770-amino-acid chain; its full sequence is Transposon Ty2-LR1 Gag-Pol polyprotein (1770 aa).

Composition is skewed to polar residues over residues 1 to 11 (MESQQLHQNPH), 19 to 39 (ASVT…SASN), and 49 to 60 (KVNSQQETTPGT). 2 disordered regions span residues 1-86 (MESQ…GQYQ) and 359-453 (QHSE…LPDH). Residues 295–397 (ENNINVSDRL…SSKPRAAKAH (103 aa)) are RNA-binding. The segment covering 369-381 (TSPNTTNTKVTTR) has biased composition (low complexity). Polar residues-rich tracts occupy residues 399 to 408 (IATSSKFSRV) and 415 to 435 (ESTV…GQQQ). Catalysis depends on aspartate 457, which acts as the For protease activity; shared with dimeric partner. An integrase-type zinc finger-like region spans residues 579-636 (NVNKSKSVNKYPYPLIHRMLGHANFRSIQKSLKKNAVTYLKESDIEWSNASTYQCPDC). The 176-residue stretch at 656–831 (ESYEPFQYLH…AGLDITTILP (176 aa)) folds into the Integrase catalytic domain. The Mg(2+) site is built by aspartate 667 and aspartate 732. 4 disordered regions span residues 1005–1038 (GGTI…MIDL), 1058–1135 (GTEE…KSSK), 1146–1165 (LPLP…VSKD), and 1170–1205 (HSRQ…TEIE). Composition is skewed to polar residues over residues 1009-1024 (ESDT…FTAR) and 1065-1082 (QRNS…STPS). The span at 1151–1165 (LTHKSPTDTSDVSKD) shows a compositional bias: basic and acidic residues. The Bipartite nuclear localization signal motif lies at 1193-1227 (KKRSLEDNETEIEVSRDTWNNKNMRSLEPPRSKKR). One can recognise a Reverse transcriptase Ty1/copia-type domain in the interval 1353–1491 (NDYYITQLDI…DILGLEIKYQ (139 aa)). Mg(2+) contacts are provided by aspartate 1361, aspartate 1442, aspartate 1443, aspartate 1625, glutamate 1667, and aspartate 1700. The 143-residue stretch at 1625–1767 (DASYGNQPYY…IKTFKLLTNK (143 aa)) folds into the RNase H Ty1/copia-type domain.

The capsid protein forms a homotrimer, from which the VLPs are assembled. The protease is a homodimer, whose active site consists of two apposed aspartic acid residues. Post-translationally, initially, virus-like particles (VLPs) are composed of the structural unprocessed proteins Gag and Gag-Pol, and also contain the host initiator methionine tRNA (tRNA(i)-Met) which serves as a primer for minus-strand DNA synthesis, and a dimer of genomic Ty RNA. Processing of the polyproteins occurs within the particle and proceeds by an ordered pathway, called maturation. First, the protease (PR) is released by autocatalytic cleavage of the Gag-Pol polyprotein, and this cleavage is a prerequisite for subsequent processing at the remaining sites to release the mature structural and catalytic proteins. Maturation takes place prior to the RT reaction and is required to produce transposition-competent VLPs.

The protein localises to the cytoplasm. The protein resides in the nucleus. The catalysed reaction is DNA(n) + a 2'-deoxyribonucleoside 5'-triphosphate = DNA(n+1) + diphosphate. It carries out the reaction Endonucleolytic cleavage to 5'-phosphomonoester.. Its function is as follows. Capsid protein (CA) is the structural component of the virus-like particle (VLP), forming the shell that encapsulates the retrotransposons dimeric RNA genome. The particles are assembled from trimer-clustered units and there are holes in the capsid shells that allow for the diffusion of macromolecules. CA also has nucleocapsid-like chaperone activity, promoting primer tRNA(i)-Met annealing to the multipartite primer-binding site (PBS), dimerization of Ty2 RNA and initiation of reverse transcription. The aspartyl protease (PR) mediates the proteolytic cleavages of the Gag and Gag-Pol polyproteins after assembly of the VLP. In terms of biological role, reverse transcriptase/ribonuclease H (RT) is a multifunctional enzyme that catalyzes the conversion of the retro-elements RNA genome into dsDNA within the VLP. The enzyme displays a DNA polymerase activity that can copy either DNA or RNA templates, and a ribonuclease H (RNase H) activity that cleaves the RNA strand of RNA-DNA heteroduplexes during plus-strand synthesis and hydrolyzes RNA primers. The conversion leads to a linear dsDNA copy of the retrotransposon that includes long terminal repeats (LTRs) at both ends. Functionally, integrase (IN) targets the VLP to the nucleus, where a subparticle preintegration complex (PIC) containing at least integrase and the newly synthesized dsDNA copy of the retrotransposon must transit the nuclear membrane. Once in the nucleus, integrase performs the integration of the dsDNA into the host genome. This Saccharomyces cerevisiae (strain ATCC 204508 / S288c) (Baker's yeast) protein is Transposon Ty2-LR1 Gag-Pol polyprotein (TY2B-LR1).